Consider the following 346-residue polypeptide: Aldose 1-epimerase (346 aa).

Residue R79 coordinates substrate. The Proton donor role is filled by H175. Residue D245 coordinates substrate. E309 functions as the Proton acceptor in the catalytic mechanism.

It belongs to the aldose epimerase family.

It localises to the cytoplasm. It catalyses the reaction alpha-D-glucose = beta-D-glucose. It participates in carbohydrate metabolism; hexose metabolism. Its function is as follows. Mutarotase converts alpha-aldose to the beta-anomer. It is active on D-glucose, L-arabinose, D-xylose, D-galactose, maltose and lactose. The chain is Aldose 1-epimerase (galM) from Escherichia coli (strain K12).